A 460-amino-acid chain; its full sequence is Decaprenylphosphoryl-beta-D-ribose oxidase (460 aa).

The region spanning 19–193 (TAPTVASVLS…LRATIEMTPT (175 aa)) is the FAD-binding PCMH-type domain. FAD-binding positions include 52 to 62 (ARGLGRSYGDN), Gly-116, 121 to 124 (TVGG), 128 to 131 (CDIH), Ile-183, and Tyr-414.

Belongs to the DprE1 family. Monomer. Interacts with DprE2 to form an epimerase complex.

It is found in the periplasm. It catalyses the reaction trans,octa-cis-decaprenylphospho-beta-D-ribofuranose + FAD + H(+) = trans,octa-cis-decaprenylphospho-beta-D-erythro-pentofuranosid-2-ulose + FADH2. The protein operates within cell wall biogenesis; cell wall polysaccharide biosynthesis. Its activity is regulated as follows. Is inhibited by 8-nitro-benzothiazinones (BTZs) such as BTZ043; BTZs are a new class of antimycobacterial agents that block formation of both cell-wall lipoarabinomannan and arabinogalactan via inhibition of decaprenyl-phospho-arabinose (DPA) synthesis. BTZs are suicide inhibitors that act via covalent modification of DprE1; the essential nitro group of these compounds is reduced by DprE1 to a nitroso group, which then specifically reacts with Cys-386 of DprE1 to form an irreversible semimercaptal adduct. Other compounds with diverse scaffolds (dinitrobenzamides and nitrobenzoquinoxalines) also act as covalent DprE1 inhibitors. Its function is as follows. Component of the DprE1-DprE2 complex that catalyzes the 2-step epimerization of decaprenyl-phospho-ribose (DPR) to decaprenyl-phospho-arabinose (DPA), a key precursor that serves as the arabinose donor required for the synthesis of cell-wall arabinans. DprE1 catalyzes the first step of epimerization, namely FAD-dependent oxidation of the C2' hydroxyl of DPR to yield the keto intermediate decaprenyl-phospho-2'-keto-D-arabinose (DPX). The intermediate DPX is then transferred to DprE2 subunit of the epimerase complex, most probably through a 'substrate channel' at the interface of DprE1-DprE2 complex. Can also use farnesyl-phosphoryl-beta-D-ribofuranose (FPR) as substrate in vitro. Appears to be essential for the growth of M.smegmatis. The protein is Decaprenylphosphoryl-beta-D-ribose oxidase of Mycolicibacterium smegmatis (strain ATCC 700084 / mc(2)155) (Mycobacterium smegmatis).